Reading from the N-terminus, the 523-residue chain is Bifunctional purine biosynthesis protein PurH (523 aa).

In terms of domain architecture, MGS-like spans 1–145 (MIKQALLSVS…KNHRDVTVIV (145 aa)).

Belongs to the PurH family.

It carries out the reaction (6R)-10-formyltetrahydrofolate + 5-amino-1-(5-phospho-beta-D-ribosyl)imidazole-4-carboxamide = 5-formamido-1-(5-phospho-D-ribosyl)imidazole-4-carboxamide + (6S)-5,6,7,8-tetrahydrofolate. It catalyses the reaction IMP + H2O = 5-formamido-1-(5-phospho-D-ribosyl)imidazole-4-carboxamide. The protein operates within purine metabolism; IMP biosynthesis via de novo pathway; 5-formamido-1-(5-phospho-D-ribosyl)imidazole-4-carboxamide from 5-amino-1-(5-phospho-D-ribosyl)imidazole-4-carboxamide (10-formyl THF route): step 1/1. Its pathway is purine metabolism; IMP biosynthesis via de novo pathway; IMP from 5-formamido-1-(5-phospho-D-ribosyl)imidazole-4-carboxamide: step 1/1. This chain is Bifunctional purine biosynthesis protein PurH, found in Cupriavidus pinatubonensis (strain JMP 134 / LMG 1197) (Cupriavidus necator (strain JMP 134)).